The chain runs to 258 residues: Ribosomal RNA small subunit methyltransferase A (258 aa).

Residues histidine 13, leucine 15, glycine 40, glutamate 62, aspartate 87, and asparagine 108 each contribute to the S-adenosyl-L-methionine site.

It belongs to the class I-like SAM-binding methyltransferase superfamily. rRNA adenine N(6)-methyltransferase family. RsmA subfamily.

The protein localises to the cytoplasm. It carries out the reaction adenosine(1518)/adenosine(1519) in 16S rRNA + 4 S-adenosyl-L-methionine = N(6)-dimethyladenosine(1518)/N(6)-dimethyladenosine(1519) in 16S rRNA + 4 S-adenosyl-L-homocysteine + 4 H(+). Functionally, specifically dimethylates two adjacent adenosines (A1518 and A1519) in the loop of a conserved hairpin near the 3'-end of 16S rRNA in the 30S particle. May play a critical role in biogenesis of 30S subunits. The sequence is that of Ribosomal RNA small subunit methyltransferase A from Sulfurihydrogenibium sp. (strain YO3AOP1).